A 307-amino-acid polypeptide reads, in one-letter code: MKPKVLLAGGTGYIGKYLSEVIENDAELFAISKYPDNKKTDDVEMTWIQCDIFHYEQVVAAMNQIDIAVFFIDPTKNSAKITQSSARDLTLIAADNFGRAAAINQVKKVIYIPGSRYDNETIERLGAYGTPVETTNLVFKRSLVNVELQVSKYDDVRSTMKVVLPKGWTLKNVVNHFIAWMGYTKGTFVKTEKSHDQFKIYIKNKVRPLAVFKIEETADGIITLILLSGSLVKKYTVNQGKLEFRLIKESAVVYIHLYDYIPRLFWPIYYFIQAPMQKMMIHGFEVDCRIKDFQSRLKSGENMKYTK.

In terms of assembly, homodimer. Interacts with GraR and GraS.

Functionally, plays a role in resistance against cationic antimicrobial peptides (CAMPs). Facilitates the activation of GraS to transduce the signal to GraR. The sequence is that of Auxiliary protein GraX (graX) from Staphylococcus aureus (strain NCTC 8325 / PS 47).